Reading from the N-terminus, the 194-residue chain is 2,4-dinitrotoluene dioxygenase system, small oxygenase component (194 aa).

Belongs to the bacterial ring-hydroxylating dioxygenase beta subunit family. The 2,4-dinitrotoluene dioxygenase (DNTDO) multicomponent enzyme system is composed of an electron transfer component and a dioxygenase component (iron sulfur protein (ISP)). The electron transfer component is composed of a ferredoxin reductase (DntAa) and a ferredoxin (DntAb), and the dioxygenase component is formed of a large alpha subunit (DntAc) and a small beta subunit (DntAd).

Functionally, component of the 2,4-dinitrotoluene dioxygenase (DNTDO) multicomponent enzyme system which catalyzes the incorporation of both atoms of molecular oxygen into 2,4-dinitrotoluene (DNT) to form 4-methyl-5-nitrocatechol (MNC) and nitrite. The beta subunit seems to have a structural role in the holoenzyme. Also able to convert naphthalene to cis-(1R,2S)-dihydroxy-1,2-dihydronaphthalene. The sequence is that of 2,4-dinitrotoluene dioxygenase system, small oxygenase component from Burkholderia sp. (strain RASC).